The chain runs to 268 residues: Protein DEEPER ROOTING 1 (268 aa).

A compositionally biased stretch (low complexity) spans 11 to 21; the sequence is LNGKQGNKKPN. Residues 11 to 39 form a disordered region; it reads LNGKQGNKKPNTVPITTHPAKQEPREEFS. Over residues 30 to 39 the composition is skewed to basic and acidic residues; that stretch reads AKQEPREEFS. The IGT motif signature appears at 44-50; sequence GLLAIGT. A disordered region spans residues 220-246; the sequence is SRAASMKKYLEDRQIPTKKESNTEDDT. Over residues 227–246 the composition is skewed to basic and acidic residues; that stretch reads KYLEDRQIPTKKESNTEDDT.

It belongs to the LAZY family. In terms of tissue distribution, expressed in roots.

Its function is as follows. Involved in the development of the root system architecture by influencing lateral root angles and primary root length. The protein is Protein DEEPER ROOTING 1 of Prunus persica (Peach).